Consider the following 211-residue polypeptide: Guanylate kinase (211 aa).

Residues Gly-7–Arg-187 form the Guanylate kinase-like domain. Gly-14–Ala-21 lines the ATP pocket.

This sequence belongs to the guanylate kinase family.

It localises to the cytoplasm. It catalyses the reaction GMP + ATP = GDP + ADP. In terms of biological role, essential for recycling GMP and indirectly, cGMP. The chain is Guanylate kinase from Aster yellows witches'-broom phytoplasma (strain AYWB).